Reading from the N-terminus, the 664-residue chain is 1,4-alpha-glucan branching enzyme GlgB 2 (664 aa).

The span at 1-17 shows a compositional bias: basic and acidic residues; sequence MGGKEMRNCKELKHEKN. Positions 1 to 31 are disordered; that stretch reads MGGKEMRNCKELKHEKNGNVTEKVGKNKGKS. The Nucleophile role is filled by aspartate 342. The active-site Proton donor is glutamate 395.

It belongs to the glycosyl hydrolase 13 family. GlgB subfamily. In terms of assembly, monomer.

The catalysed reaction is Transfers a segment of a (1-&gt;4)-alpha-D-glucan chain to a primary hydroxy group in a similar glucan chain.. The protein operates within glycan biosynthesis; glycogen biosynthesis. In terms of biological role, catalyzes the formation of the alpha-1,6-glucosidic linkages in glycogen by scission of a 1,4-alpha-linked oligosaccharide from growing alpha-1,4-glucan chains and the subsequent attachment of the oligosaccharide to the alpha-1,6 position. The sequence is that of 1,4-alpha-glucan branching enzyme GlgB 2 (glgB2) from Clostridium perfringens (strain 13 / Type A).